Here is a 728-residue protein sequence, read N- to C-terminus: Homoaconitase, mitochondrial (728 aa).

Residues 1-24 (MVAIPRLARLSVPAWALSARGRFY) constitute a mitochondrion transit peptide. Residues Cys-362, Cys-422, and Cys-425 each coordinate [4Fe-4S] cluster.

The protein belongs to the aconitase/IPM isomerase family. The cofactor is [4Fe-4S] cluster.

The protein localises to the mitochondrion. The enzyme catalyses (2R,3S)-homoisocitrate = cis-homoaconitate + H2O. The protein operates within amino-acid biosynthesis; L-lysine biosynthesis via AAA pathway; L-alpha-aminoadipate from 2-oxoglutarate: step 3/5. Catalyzes the reversible hydration of cis-homoaconitate to (2R,3S)-homoisocitrate, a step in the alpha-aminoadipate pathway for lysine biosynthesis. The sequence is that of Homoaconitase, mitochondrial (LYS4) from Cryptococcus neoformans var. neoformans serotype D (strain JEC21 / ATCC MYA-565) (Filobasidiella neoformans).